The primary structure comprises 306 residues: Beta-lactamase 1 (306 aa).

An N-terminal signal peptide occupies residues 1-43; the sequence is MKNKKMLKIGMCVGILGLSITSLVTFTGGALQVEAKEKTGQVK. Ser-89 acts as the Acyl-ester intermediate in catalysis. Residue Glu-185 is the Proton acceptor of the active site. 251-253 lines the substrate pocket; sequence KSG.

It belongs to the class-A beta-lactamase family.

The protein resides in the secreted. It catalyses the reaction a beta-lactam + H2O = a substituted beta-amino acid. Acts preferentially on penicillins. The sequence is that of Beta-lactamase 1 (penPC) from Bacillus cereus.